The primary structure comprises 193 residues: dCTP deaminase (193 aa).

Residues 110 to 115, aspartate 128, 136 to 138, tyrosine 171, lysine 178, and glutamine 182 contribute to the dCTP site; these read RSSLAR and VLE. Glutamate 138 (proton donor/acceptor) is an active-site residue. The interval 169–193 is disordered; it reads RPYNSRQDAKYRDQQGAVASRIDKD.

The protein belongs to the dCTP deaminase family. In terms of assembly, homotrimer.

The catalysed reaction is dCTP + H2O + H(+) = dUTP + NH4(+). Its pathway is pyrimidine metabolism; dUMP biosynthesis; dUMP from dCTP (dUTP route): step 1/2. Its function is as follows. Catalyzes the deamination of dCTP to dUTP. This chain is dCTP deaminase, found in Serratia proteamaculans (strain 568).